A 148-amino-acid chain; its full sequence is NPC intracellular cholesterol transporter 2 homolog a (148 aa).

Residues 1–16 (MLRYAVIACAALVVFA) form the signal peptide. 3 disulfide bridges follow: Cys24/Cys140, Cys39/Cys46, and Cys92/Cys99. Residue Asn51 is glycosylated (N-linked (GlcNAc...) asparagine).

It belongs to the NPC2 family. As to expression, broadly expressed with a higher level of expression in many tissues, including midgut, salivary gland and ventral nerve cord.

The protein localises to the secreted. Functionally, functions redundantly with Npc2b in regulating sterol homeostasis and ecdysteroid biosynthesis, probably by controlling the availability of sterol substrate. The polypeptide is NPC intracellular cholesterol transporter 2 homolog a (Drosophila melanogaster (Fruit fly)).